We begin with the raw amino-acid sequence, 123 residues long: Large ribosomal subunit protein uL14c (123 aa).

The protein belongs to the universal ribosomal protein uL14 family. In terms of assembly, part of the 50S ribosomal subunit.

The protein localises to the plastid. It localises to the chloroplast. Its function is as follows. Binds to 23S rRNA. This Saccharum hybrid (Sugarcane) protein is Large ribosomal subunit protein uL14c.